We begin with the raw amino-acid sequence, 145 residues long: Bacilliredoxin SAR1592 (145 aa).

The protein belongs to the bacilliredoxin family.

The polypeptide is Bacilliredoxin SAR1592 (Staphylococcus aureus (strain MRSA252)).